A 276-amino-acid polypeptide reads, in one-letter code: Pyrroline-5-carboxylate reductase (276 aa).

This sequence belongs to the pyrroline-5-carboxylate reductase family.

It localises to the cytoplasm. It carries out the reaction L-proline + NADP(+) = (S)-1-pyrroline-5-carboxylate + NADPH + 2 H(+). The enzyme catalyses L-proline + NAD(+) = (S)-1-pyrroline-5-carboxylate + NADH + 2 H(+). Its pathway is amino-acid biosynthesis; L-proline biosynthesis; L-proline from L-glutamate 5-semialdehyde: step 1/1. In Arabidopsis thaliana (Mouse-ear cress), this protein is Pyrroline-5-carboxylate reductase (PROC1).